The primary structure comprises 87 residues: Class II metallothionein-like protein 1A (87 aa).

The protein belongs to the metallothionein superfamily. Type 15 family. In terms of tissue distribution, expressed in developing seeds.

Its function is as follows. Metallothioneins have a high content of cysteine residues that bind various heavy metals. The protein is Class II metallothionein-like protein 1A (MT21A) of Oryza sativa subsp. japonica (Rice).